An 88-amino-acid chain; its full sequence is Mitochondrial import inner membrane translocase subunit Tim10 (88 aa).

The Twin CX3C motif motif lies at 25–49; the sequence is CSAKCISKYNEGDLNVGESVCAERC. Cystine bridges form between Cys-25–Cys-49 and Cys-29–Cys-45. Positions 63 to 88 are disordered; it reads KMSGTQPGQEVPQEAPAAAPEKKGWF. Residues 68-81 show a composition bias toward low complexity; that stretch reads QPGQEVPQEAPAAA.

The protein belongs to the small Tim family. As to quaternary structure, heterohexamer; composed of 3 copies of timm9 and 3 copies of timm10, named soluble 70 kDa complex. Associates directly with the TIM22 complex, whose core is composed of timm22. Interacts with the transmembrane regions of multi-pass transmembrane proteins in transit.

It is found in the mitochondrion inner membrane. Its function is as follows. Component of the TIM22 complex, a complex that mediates the import and insertion of multi-pass transmembrane proteins into the mitochondrial inner membrane. The TIM22 complex forms a twin-pore translocase that uses the membrane potential as external driving force. This Dictyostelium discoideum (Social amoeba) protein is Mitochondrial import inner membrane translocase subunit Tim10 (timm10).